The primary structure comprises 261 residues: Protein STAY-GREEN, chloroplastic (261 aa).

A chloroplast-targeting transit peptide spans 1–54; it reads MDTLTSAPLLTTKFKPSFSPQQKPCFPHRRRFENGKKNQSIVPVARLFGPAIFE.

This sequence belongs to the staygreen family.

Its subcellular location is the plastid. The protein localises to the chloroplast. Functionally, probably involved in the disassembling mechanism of the intact light-harvesting complex of photosystem II (LHCII) in the thylakoid membranes. Required for the chlorophyll breakdown pathway. Acts independent and upstream of pheophorbide a oxygenase (PAO). This Pisum sativum (Garden pea) protein is Protein STAY-GREEN, chloroplastic (SGR).